Consider the following 417-residue polypeptide: mRNA cap guanine-N(7) methyltransferase (417 aa).

The 284-residue stretch at 129-412 (SPIIKLRNFN…LYTVFAFKKV (284 aa)) folds into the mRNA cap 0 methyltransferase domain. 138–139 (NN) is a binding site for mRNA. Residues Lys-142, Gly-160, Asp-182, Asp-211, Gln-237, and Tyr-242 each contribute to the S-adenosyl-L-methionine site.

Belongs to the class I-like SAM-binding methyltransferase superfamily. mRNA cap 0 methyltransferase family.

The protein localises to the nucleus. It catalyses the reaction a 5'-end (5'-triphosphoguanosine)-ribonucleoside in mRNA + S-adenosyl-L-methionine = a 5'-end (N(7)-methyl 5'-triphosphoguanosine)-ribonucleoside in mRNA + S-adenosyl-L-homocysteine. In terms of biological role, responsible for methylating the 5'-cap structure of mRNAs. The polypeptide is mRNA cap guanine-N(7) methyltransferase (ABD1) (Candida glabrata (strain ATCC 2001 / BCRC 20586 / JCM 3761 / NBRC 0622 / NRRL Y-65 / CBS 138) (Yeast)).